Reading from the N-terminus, the 502-residue chain is Lysine--tRNA ligase (502 aa).

2 residues coordinate Mg(2+): Glu409 and Glu416.

Belongs to the class-II aminoacyl-tRNA synthetase family. In terms of assembly, homodimer. Mg(2+) is required as a cofactor.

Its subcellular location is the cytoplasm. The catalysed reaction is tRNA(Lys) + L-lysine + ATP = L-lysyl-tRNA(Lys) + AMP + diphosphate. The polypeptide is Lysine--tRNA ligase (Prochlorococcus marinus (strain SARG / CCMP1375 / SS120)).